The following is a 132-amino-acid chain: Small ribosomal subunit protein uS11 (132 aa).

Belongs to the universal ribosomal protein uS11 family. Part of the 30S ribosomal subunit. Interacts with proteins S7 and S18. Binds to IF-3.

In terms of biological role, located on the platform of the 30S subunit, it bridges several disparate RNA helices of the 16S rRNA. Forms part of the Shine-Dalgarno cleft in the 70S ribosome. The protein is Small ribosomal subunit protein uS11 of Chlamydia trachomatis serovar L2 (strain ATCC VR-902B / DSM 19102 / 434/Bu).